Here is a 165-residue protein sequence, read N- to C-terminus: Phosphopantetheine adenylyltransferase (165 aa).

Thr-10 provides a ligand contact to substrate. ATP-binding positions include 10–11 and His-18; that span reads TF. The substrate site is built by Lys-42, Leu-75, and Arg-89. Residues 90-92, Glu-100, and 125-131 contribute to the ATP site; these read GVR and VSFISSS.

Belongs to the bacterial CoaD family. In terms of assembly, homohexamer. Mg(2+) is required as a cofactor.

The protein localises to the cytoplasm. The enzyme catalyses (R)-4'-phosphopantetheine + ATP + H(+) = 3'-dephospho-CoA + diphosphate. Its pathway is cofactor biosynthesis; coenzyme A biosynthesis; CoA from (R)-pantothenate: step 4/5. In terms of biological role, reversibly transfers an adenylyl group from ATP to 4'-phosphopantetheine, yielding dephospho-CoA (dPCoA) and pyrophosphate. In Buchnera aphidicola subsp. Acyrthosiphon pisum (strain 5A), this protein is Phosphopantetheine adenylyltransferase.